We begin with the raw amino-acid sequence, 298 residues long: N-acetylmuramic acid 6-phosphate etherase (298 aa).

One can recognise an SIS domain in the interval 55-218; that stretch reads IHAQVSGGGR…STGLMIKSGK (164 aa). The Proton donor role is filled by Glu-83. Glu-114 is an active-site residue.

Belongs to the GCKR-like family. MurNAc-6-P etherase subfamily. As to quaternary structure, homodimer.

The catalysed reaction is N-acetyl-D-muramate 6-phosphate + H2O = N-acetyl-D-glucosamine 6-phosphate + (R)-lactate. Its pathway is amino-sugar metabolism; 1,6-anhydro-N-acetylmuramate degradation. The protein operates within amino-sugar metabolism; N-acetylmuramate degradation. It participates in cell wall biogenesis; peptidoglycan recycling. Its function is as follows. Specifically catalyzes the cleavage of the D-lactyl ether substituent of MurNAc 6-phosphate, producing GlcNAc 6-phosphate and D-lactate. Together with AnmK, is also required for the utilization of anhydro-N-acetylmuramic acid (anhMurNAc) either imported from the medium or derived from its own cell wall murein, and thus plays a role in cell wall recycling. The protein is N-acetylmuramic acid 6-phosphate etherase of Escherichia coli O81 (strain ED1a).